The sequence spans 849 residues: Disks large homolog 3 (849 aa).

Residues 32–101 are disordered; it reads DWQVPDPYGP…GKSTPKLNGS (70 aa). The segment covering 41–53 has biased composition (gly residues); it reads PSGGNGASSGYGG. A compositionally biased stretch (polar residues) spans 57–69; the sequence is QTLPSQAGATPTP. PDZ domains follow at residues 149 to 235, 244 to 330, and 404 to 484; these read EIVL…VRRR, EVNL…VAKP, and KIIL…AQYR. A Phosphoserine modification is found at Ser-157. In terms of domain architecture, SH3 spans 519-589; the sequence is KRSLYVRALF…PSKKRVEKKE (71 aa). A Guanylate kinase-like domain is found at 659 to 834; the sequence is ARPVIILGPM…IYNKIKQIIE (176 aa). At Tyr-705 the chain carries Phosphotyrosine.

This sequence belongs to the MAGUK family. In terms of assembly, interacts through its PDZ domains with NETO1, GRIN2B, SYNGAP1 and APC. Interacts through its first two PDZ domains with ERBB4. Interacts through its third PDZ domain with NLGN1, and probably with NLGN2 and NLGN3. Interacts through its guanylate kinase-like domain with DLGAP1, DLGAP2, DLGAP3 and DLGAP4. Interacts with FRMPD4 (via C-terminus). Interacts with LRFN1, LRFN2 and LRFN4. Interacts with FLTP. Interacts with GPR85. Interacts with DGKI (via PDZ-binding motif).

In terms of biological role, required for learning most likely through its role in synaptic plasticity following NMDA receptor signaling. In Mus musculus (Mouse), this protein is Disks large homolog 3 (Dlg3).